Consider the following 427-residue polypeptide: MDDSKTNGRQNASRIVALANTIQKSVAELQAVLDSKGLPAPSFAEDASPDPLPFEAQKAQDAVLDATAELHDILLEPTALVLKTISNEYVAFLGFISRYDIPNFVPLGGRVSFTDIAKKTGFEEGIVKRLLRAAICRRIFQEPESGYVAHTKASKAMRSKILLTFLRTGADMGWYTIFKLVDAAEKWPDVQEQDQTAFNLAHDVQGTYFENVAKSAKNAELFASGMATQWELPGYELHHLLDGYDWTGLGKAKVIDVGGFRGRISIALAERFPDLDLLVQDMEMNEADAHAAVPSALKDRVHFMSRDIFTTQPVRADVYYIRQIFHDWSDKYCTKLLRAHTSQLEAGSSVLIHDCILPEVPGSSLPLWKERDMRAMDLGLVAHMNGRERSVDEWHKLVTEADPRFKIRQISQPEGSMLALIEVVFNA.

2 residues coordinate S-adenosyl-L-methionine: W230 and D281. The active-site Proton acceptor is H326.

It belongs to the class I-like SAM-binding methyltransferase superfamily. Cation-independent O-methyltransferase family. COMT subfamily. S-adenosyl-L-methionine is required as a cofactor.

It participates in mycotoxin biosynthesis. Functionally, O-methyltransferase; part of the 2 gene clusters that mediate the biosynthesis of fusicoccins, diterpene glucosides that display phytohormone-like activity and function as potent activators of plasma membrane H(+)-ATPases in plants by modifying 14-3-3 proteins and cause the plant disease constriction canker. The first step in the pathway is performed by the fusicoccadiene synthase PaFS that possesses both prenyl transferase and terpene cyclase activity, converting isopentenyl diphosphate and dimethylallyl diphosphate into geranylgeranyl diphosphate (GGDP) and successively converting GGDP into fusicocca-2,10(14)-diene, a precursor for fusicoccin H. The second step is the oxidation at the C-8 position by the cytochrome P450 monooxygenase PaP450-2 to yield fusicocca-2,10(14)-diene-8-beta-ol. The cytochrome P450 monooxygenase PaP450-1 then catalyzes the hydroxylation at the C-16 position to produce fusicocca-2,10(14)-diene-8-beta,16-diol. The dioxygenase fc-dox then catalyzes the 16-oxydation of fusicocca-2,10(14)-diene-8-beta,16-diol to yield an aldehyde (8-beta-hydroxyfusicocca-1,10(14)-dien-16-al). The short-chain dehydrogenase/reductase fc-sdr catalyzes the reduction of the aldehyde to yield fusicocca-1,10(14)-diene-8-beta,16-diol. The next step is the hydroxylation at C-9 performed by the cytochrome P450 monooxygenase PaP450-3 that leads to fusicoccin H aglycon which is glycosylated to fusicoccin H by the O-glycosyltransferase PaGT. Hydroxylation at C-12 by the cytochrome P450 monooxygenase PaP450-4 leads then to the production of fusicoccin Q and is followed by methylation by the O-methyltransferase PaMT to yield fusicoccin P. Fusicoccin P is further converted to fusicoccin J via prenylation by the O-glucose prenyltransferase PaPT. Cytochrome P450 monooxygenase PaP450-5 then performs hydroxylation at C-19 to yield dideacetyl-fusicoccin A which is acetylated to 3'-O-deacetyl-fusicoccin A by the O-acetyltransferase PaAT-2. Finally, a another acetylation by the O-acetyltransferase PaAT-1 yields fusicoccin A. This is O-methyltransferase PaMT from Phomopsis amygdali (Fusicoccum amygdali).